A 258-amino-acid polypeptide reads, in one-letter code: Tryptophan synthase alpha chain (258 aa).

Residues E50 and D61 each act as proton acceptor in the active site.

This sequence belongs to the TrpA family. In terms of assembly, tetramer of two alpha and two beta chains.

The enzyme catalyses (1S,2R)-1-C-(indol-3-yl)glycerol 3-phosphate + L-serine = D-glyceraldehyde 3-phosphate + L-tryptophan + H2O. It participates in amino-acid biosynthesis; L-tryptophan biosynthesis; L-tryptophan from chorismate: step 5/5. In terms of biological role, the alpha subunit is responsible for the aldol cleavage of indoleglycerol phosphate to indole and glyceraldehyde 3-phosphate. This Clostridium beijerinckii (strain ATCC 51743 / NCIMB 8052) (Clostridium acetobutylicum) protein is Tryptophan synthase alpha chain.